The primary structure comprises 548 residues: 5-epi-aristolochene synthase 3 (548 aa).

Residues Asp-301, Asp-305, Asp-444, Thr-448, and Glu-452 each coordinate Mg(2+). A DDXXD motif motif is present at residues Asp-301–Asp-305.

It belongs to the terpene synthase family. As to quaternary structure, monomer. Mg(2+) is required as a cofactor. In terms of tissue distribution, expressed in roots, but not in shoots.

The protein localises to the cytoplasm. It catalyses the reaction (2E,6E)-farnesyl diphosphate = (+)-5-epi-aristolochene + diphosphate. Its pathway is secondary metabolite biosynthesis; terpenoid biosynthesis. In terms of biological role, catalyzes the cyclization of trans,trans-farnesyl diphosphate (FPP) to the bicyclic intermediate 5-epi-aristolochene, initial step in the conversion of FPP to the sesquiterpenoid antifungal phytoalexin capsidiol. Produces germacrene A as an enzyme-bound intermediate that is not released by the enzyme, but is further cyclized to produce the bicyclic 5-epi-aristolochene. In Nicotiana attenuata (Coyote tobacco), this protein is 5-epi-aristolochene synthase 3.